A 148-amino-acid polypeptide reads, in one-letter code: Endoribonuclease YbeY (148 aa).

3 residues coordinate Zn(2+): His-105, His-109, and Asp-115.

This sequence belongs to the endoribonuclease YbeY family. The cofactor is Zn(2+).

It is found in the cytoplasm. In terms of biological role, single strand-specific metallo-endoribonuclease involved in late-stage 70S ribosome quality control and in maturation of the 3' terminus of the 16S rRNA. The sequence is that of Endoribonuclease YbeY from Chlorobium phaeovibrioides (strain DSM 265 / 1930) (Prosthecochloris vibrioformis (strain DSM 265)).